We begin with the raw amino-acid sequence, 62 residues long: MQKLFIVLLLFCILRLDAEVDGRTMSHCNQSECQEKCKKKNKNGRCITEFEMNYVYNRCRCN.

A signal peptide spans 1–18 (MQKLFIVLLLFCILRLDA). Cystine bridges form between Cys28–Cys46, Cys33–Cys59, and Cys37–Cys61.

Belongs to the short scorpion toxin superfamily. Potassium channel inhibitor family. Alpha-KTx 23 subfamily. As to expression, expressed by the venom gland.

It is found in the secreted. May block potassium channels. This is Potassium channel toxin alpha-KTx Tx308 from Buthus israelis (Israeli scorpion).